The following is a 348-amino-acid chain: N-acetyl-gamma-glutamyl-phosphate reductase (348 aa).

C151 is a catalytic residue.

It belongs to the NAGSA dehydrogenase family. Type 1 subfamily.

It localises to the cytoplasm. It carries out the reaction N-acetyl-L-glutamate 5-semialdehyde + phosphate + NADP(+) = N-acetyl-L-glutamyl 5-phosphate + NADPH + H(+). It participates in amino-acid biosynthesis; L-arginine biosynthesis; N(2)-acetyl-L-ornithine from L-glutamate: step 3/4. In terms of biological role, catalyzes the NADPH-dependent reduction of N-acetyl-5-glutamyl phosphate to yield N-acetyl-L-glutamate 5-semialdehyde. The chain is N-acetyl-gamma-glutamyl-phosphate reductase from Lachnospira eligens (strain ATCC 27750 / DSM 3376 / VPI C15-48 / C15-B4) (Eubacterium eligens).